The following is a 346-amino-acid chain: Histidinol-phosphate aminotransferase (346 aa).

K209 is modified (N6-(pyridoxal phosphate)lysine).

This sequence belongs to the class-II pyridoxal-phosphate-dependent aminotransferase family. Histidinol-phosphate aminotransferase subfamily. Homodimer. Requires pyridoxal 5'-phosphate as cofactor.

The catalysed reaction is L-histidinol phosphate + 2-oxoglutarate = 3-(imidazol-4-yl)-2-oxopropyl phosphate + L-glutamate. It functions in the pathway amino-acid biosynthesis; L-histidine biosynthesis; L-histidine from 5-phospho-alpha-D-ribose 1-diphosphate: step 7/9. The protein is Histidinol-phosphate aminotransferase of Vibrio vulnificus (strain YJ016).